An 85-amino-acid chain; its full sequence is F(1)-ATPase inhibitor IF(1), mitochondrial (85 aa).

The N-terminal 22 residues, M1 to Y22, are a transit peptide targeting the mitochondrion. A coiled-coil region spans residues K41–T84.

Belongs to the ATPase inhibitor family. As to quaternary structure, monomer and homodimer. The protein aggregates less strongly with increasing pH.

It localises to the mitochondrion. Functionally, endogenous ATPase inhibitor, which inhibits specifically the reverse ATPase reaction of mitochondrial F(1)F(0)-type ATP synthase. It limits ATP depletion when the mitochondrial membrane potential falls below a threshold and the F(1)F(0)-ATP synthase starts hydrolyzing ATP to pump protons out of the mitochondrial matrix. Required to avoid the consumption of cellular ATP when the F(1)F(0)-ATP synthase enzyme acts as an ATP hydrolase. Functions through inserting its N-terminal part into the catalytically active F1-ATPase, thereby blocking its rotational movement and subsequently the ATP hydrolase activity. The polypeptide is F(1)-ATPase inhibitor IF(1), mitochondrial (INH1) (Saccharomyces cerevisiae (strain ATCC 204508 / S288c) (Baker's yeast)).